A 145-amino-acid polypeptide reads, in one-letter code: Large ribosomal subunit protein uL15 (145 aa).

Residues 1-57 (MKLNDLSPAPGSRREKHRPGRGIGSGLGKTGGRGHKGQTSRSGGTIAPGFEGGQQPL) are disordered. A compositionally biased stretch (gly residues) spans 21–31 (RGIGSGLGKTG).

The protein belongs to the universal ribosomal protein uL15 family. Part of the 50S ribosomal subunit.

In terms of biological role, binds to the 23S rRNA. In Pseudomonas fluorescens (strain Pf0-1), this protein is Large ribosomal subunit protein uL15.